We begin with the raw amino-acid sequence, 88 residues long: Small ribosomal subunit protein uS17 (88 aa).

This sequence belongs to the universal ribosomal protein uS17 family. As to quaternary structure, part of the 30S ribosomal subunit.

Functionally, one of the primary rRNA binding proteins, it binds specifically to the 5'-end of 16S ribosomal RNA. This is Small ribosomal subunit protein uS17 from Yersinia pseudotuberculosis serotype O:1b (strain IP 31758).